A 283-amino-acid chain; its full sequence is Pantothenate synthetase (283 aa).

Position 26–33 (26–33) interacts with ATP; the sequence is MGNLHEGH. The active-site Proton donor is H33. Q57 is a (R)-pantoate binding site. Q57 lines the beta-alanine pocket. 144–147 serves as a coordination point for ATP; sequence GKKD. Residue Q150 participates in (R)-pantoate binding. 181–184 is an ATP binding site; it reads LSSR.

Belongs to the pantothenate synthetase family. Homodimer.

It localises to the cytoplasm. The catalysed reaction is (R)-pantoate + beta-alanine + ATP = (R)-pantothenate + AMP + diphosphate + H(+). The protein operates within cofactor biosynthesis; (R)-pantothenate biosynthesis; (R)-pantothenate from (R)-pantoate and beta-alanine: step 1/1. Its function is as follows. Catalyzes the condensation of pantoate with beta-alanine in an ATP-dependent reaction via a pantoyl-adenylate intermediate. This Variovorax paradoxus (strain S110) protein is Pantothenate synthetase.